The sequence spans 143 residues: Holo-[acyl-carrier-protein] synthase (143 aa).

Mg(2+) is bound by residues aspartate 9 and glutamate 63.

It belongs to the P-Pant transferase superfamily. AcpS family. It depends on Mg(2+) as a cofactor.

It is found in the cytoplasm. The enzyme catalyses apo-[ACP] + CoA = holo-[ACP] + adenosine 3',5'-bisphosphate + H(+). Functionally, transfers the 4'-phosphopantetheine moiety from coenzyme A to a Ser of acyl-carrier-protein. The chain is Holo-[acyl-carrier-protein] synthase from Burkholderia pseudomallei (strain 668).